Reading from the N-terminus, the 428-residue chain is Gamma-glutamyl phosphate reductase (428 aa).

Belongs to the gamma-glutamyl phosphate reductase family.

Its subcellular location is the cytoplasm. The enzyme catalyses L-glutamate 5-semialdehyde + phosphate + NADP(+) = L-glutamyl 5-phosphate + NADPH + H(+). It functions in the pathway amino-acid biosynthesis; L-proline biosynthesis; L-glutamate 5-semialdehyde from L-glutamate: step 2/2. Its function is as follows. Catalyzes the NADPH-dependent reduction of L-glutamate 5-phosphate into L-glutamate 5-semialdehyde and phosphate. The product spontaneously undergoes cyclization to form 1-pyrroline-5-carboxylate. In Zymomonas mobilis subsp. mobilis (strain ATCC 31821 / ZM4 / CP4), this protein is Gamma-glutamyl phosphate reductase.